A 428-amino-acid chain; its full sequence is Adenosylmethionine-8-amino-7-oxononanoate aminotransferase (428 aa).

Residue tryptophan 52 coordinates substrate. Pyridoxal 5'-phosphate is bound at residue 112-113 (GS). Tyrosine 144 serves as a coordination point for substrate. Residue aspartate 245 participates in pyridoxal 5'-phosphate binding. Lysine 274 and glycine 307 together coordinate substrate. Lysine 274 is subject to N6-(pyridoxal phosphate)lysine. 308-309 (PT) contributes to the pyridoxal 5'-phosphate binding site. Arginine 391 is a substrate binding site.

It belongs to the class-III pyridoxal-phosphate-dependent aminotransferase family. BioA subfamily. In terms of assembly, homodimer. Pyridoxal 5'-phosphate serves as cofactor.

Its subcellular location is the cytoplasm. The enzyme catalyses (8S)-8-amino-7-oxononanoate + S-adenosyl-L-methionine = S-adenosyl-4-methylsulfanyl-2-oxobutanoate + (7R,8S)-7,8-diammoniononanoate. It participates in cofactor biosynthesis; biotin biosynthesis; 7,8-diaminononanoate from 8-amino-7-oxononanoate (SAM route): step 1/1. Its function is as follows. Catalyzes the transfer of the alpha-amino group from S-adenosyl-L-methionine (SAM) to 7-keto-8-aminopelargonic acid (KAPA) to form 7,8-diaminopelargonic acid (DAPA). It is the only aminotransferase known to utilize SAM as an amino donor. This Buchnera aphidicola subsp. Acyrthosiphon pisum (strain APS) (Acyrthosiphon pisum symbiotic bacterium) protein is Adenosylmethionine-8-amino-7-oxononanoate aminotransferase.